The chain runs to 551 residues: Interferon-induced, double-stranded RNA-activated protein kinase (551 aa).

At Ala-2 the chain carries N-acetylalanine. The tract at residues 2 to 180 is (Microbial infection) Interaction with HCV NS5A; that stretch reads AGDLSAGFFM…SVKSDYLSSG (179 aa). The 69-residue stretch at 9–77 folds into the DRBM 1 domain; it reads FFMEELNTYR…AKLAVEILNK (69 aa). Lys-69 participates in a covalent cross-link: Glycyl lysine isopeptide (Lys-Gly) (interchain with G-Cter in ISG15). Position 83 is a phosphoserine (Ser-83). Phosphothreonine; by autocatalysis is present on residues Thr-88, Thr-89, and Thr-90. Residues 100-167 enclose the DRBM 2 domain; that stretch reads NYIGLINRIA…AKLAYLQILS (68 aa). Tyr-101 is subject to Phosphotyrosine; by autocatalysis. A Glycyl lysine isopeptide (Lys-Gly) (interchain with G-Cter in ISG15) cross-link involves residue Lys-159. Tyr-162 bears the Phosphotyrosine; by autocatalysis mark. A compositionally biased stretch (polar residues) spans 202–215; sequence SSSEGDFSADTSEI. The tract at residues 202 to 222 is disordered; it reads SSSEGDFSADTSEINSNSDSL. Residue Ser-242 is modified to Phosphoserine; by autocatalysis. 2 positions are modified to phosphothreonine; by autocatalysis: Thr-255 and Thr-258. The tract at residues 266–362 is dimerization; it reads DFKEIELIGS…NSSRSKTKCL (97 aa). Residues 266-551 are interaction with TRAF5; that stretch reads DFKEIELIGS…SPEKNERHTC (286 aa). The Protein kinase domain occupies 267-538; sequence FKEIELIGSG…TSEILRTLTV (272 aa). Residue 273-281 coordinates ATP; sequence IGSGGFGQV. Tyr-293 is subject to Phosphotyrosine; by autocatalysis. Lys-296 contributes to the ATP binding site. 2 tandem repeats follow at residues 331-343 and 345-357. The segment at 331 to 357 is 2 X 13 AA approximate repeats; the sequence is DYDPETSDDSLESSDYDPENSKNSSRS. An interaction with EIF2S1/EIF-2ALPHA region spans residues 379-496; it reads EKRRGEKLDK…TAFETSKFFT (118 aa). Asp-414 functions as the Proton acceptor in the catalytic mechanism. Asp-432 is a binding site for Mg(2+). A phosphothreonine; by autocatalysis mark is found at Thr-446 and Thr-451. Residues Ser-456 and Ser-542 each carry the phosphoserine modification.

Belongs to the protein kinase superfamily. Ser/Thr protein kinase family. GCN2 subfamily. Homodimer. Interacts with STRBP. Interacts with DNAJC3. Forms a complex with FANCA, FANCC, FANCG and HSP70. Interacts with ADAR/ADAR1. Interacts with IRS1. The inactive form interacts with NCK1 and GSN. Interacts (via the kinase catalytic domain) with STAT3 (via SH2 domain), TRAF2 (C-terminus), TRAF5 (C-terminus) and TRAF6 (C-terminus). Interacts with MAP2K6, IKBKB/IKKB, NPM1, TARBP2, NLRP1, NLRP3, NLRC4 and AIM2. Interacts (via DRBM 1 domain) with DUS2L (via DRBM domain). Interacts with DHX9 (via N-terminus) and this interaction is dependent upon activation of the kinase. Interacts with EIF2S1/EIF-2ALPHA; this interaction induces a conformational change in EIF2S1 and its phosphorylation by EIF2AK2. As to quaternary structure, (Microbial infection) Interacts with human cytomegalovirus (HCMV) TRS1; this interaction retains EIF2AK2 to the nucleus and prevents its activation. In terms of assembly, (Microbial infection) Interacts with vaccinia virus protein K3 (K3L); this interaction inhibits EIF2AK2. (Microbial infection) Interacts with human herpes simplex virus 1 (HHV-1) protein US11 in an RNA-dependent manner. As to quaternary structure, (Microbial infection) The inactive form interacts with Toscana virus (TOS) NSS. In terms of assembly, (Microbial infection) Interacts with herpes virus 8 protein v-IRF2; this interaction inhibits EIF2AK2 activation. (Microbial infection) Interacts with vaccinia protein E3. As to quaternary structure, (Microbial infection) Interacts (via N-terminus) with Hepatitis C virus (HCV) mature core protein (via N-terminus); this interaction induces the autophosphorylation of EIF2AK2. In terms of assembly, (Microbial infection) Interacts with Hepatitis C virus (HCV) non-structural protein 5A (NS5A); this interaction leads to disruption of EIF2AK2 dimerization by NS5A. (Microbial infection) Interacts with Hepatitis C virus (HCV) envelope glycoprotein E2; this interaction inhibits EIF2AK2 and blocks its inhibitory effect on protein synthesis and cell growth. As to quaternary structure, (Microbial infection) Interacts with human respiratory syncytial virus (HRSV) nucleoprotein; this interaction inhibits EIF2AK2 phosphorylation of EIF2S1 and blocks EIF2AK2-mediated translation shutoff. In terms of assembly, (Microbial infection) Interacts with human herpesvirus 8 protein MTA/ORF57; this interaction inhibits stress granule formation. It depends on Mg(2+) as a cofactor. In terms of processing, autophosphorylated on several Ser, Thr and Tyr residues. Autophosphorylation of Thr-451 is dependent on Thr-446 and is stimulated by dsRNA binding and dimerization. Autophosphorylation apparently leads to the activation of the kinase. Tyrosine autophosphorylation is essential for efficient dsRNA-binding, dimerization, and kinase activation. Highly expressed in thymus, spleen and bone marrow compared to non-hematopoietic tissues such as small intestine, liver, or kidney tissues. Colocalizes with GSK3B and TAU in the Alzheimer disease (AD) brain. Elevated levels seen in breast and colon carcinomas, and which correlates with tumor progression and invasiveness or risk of progression.

Its subcellular location is the cytoplasm. The protein resides in the nucleus. It is found in the perinuclear region. It catalyses the reaction L-seryl-[protein] + ATP = O-phospho-L-seryl-[protein] + ADP + H(+). The enzyme catalyses L-threonyl-[protein] + ATP = O-phospho-L-threonyl-[protein] + ADP + H(+). The catalysed reaction is L-tyrosyl-[protein] + ATP = O-phospho-L-tyrosyl-[protein] + ADP + H(+). Its activity is regulated as follows. Initially produced in an inactive form and is activated by binding to viral dsRNA, which causes dimerization and autophosphorylation in the activation loop and stimulation of function. ISGylation can activate it in the absence of viral infection. Can also be activated by heparin, pro-inflammatory stimuli, growth factors, cytokines, oxidative stress and the cellular protein PRKRA. Activity is markedly stimulated by manganese ions. Activation is blocked by the viral components HIV-1 Tat protein and large amounts of HIV-1 trans-activation response (TAR) RNA element as well as by the cellular proteins TARBP2, DUS2L, NPM1, NCK1 and ADAR. Down-regulated by Toscana virus (TOS) and Rift valley fever virus (RVFV) NSS which promote its proteasomal degradation. Inhibited by vaccinia virus protein E3, probably via dsRNA sequestering. Functionally, IFN-induced dsRNA-dependent serine/threonine-protein kinase that phosphorylates the alpha subunit of eukaryotic translation initiation factor 2 (EIF2S1/eIF-2-alpha) and plays a key role in the innate immune response to viral infection. Inhibits viral replication via the integrated stress response (ISR): EIF2S1/eIF-2-alpha phosphorylation in response to viral infection converts EIF2S1/eIF-2-alpha in a global protein synthesis inhibitor, resulting to a shutdown of cellular and viral protein synthesis, while concomitantly initiating the preferential translation of ISR-specific mRNAs, such as the transcriptional activator ATF4. Exerts its antiviral activity on a wide range of DNA and RNA viruses including hepatitis C virus (HCV), hepatitis B virus (HBV), measles virus (MV) and herpes simplex virus 1 (HHV-1). Also involved in the regulation of signal transduction, apoptosis, cell proliferation and differentiation: phosphorylates other substrates including p53/TP53, PPP2R5A, DHX9, ILF3, IRS1 and the HHV-1 viral protein US11. In addition to serine/threonine-protein kinase activity, also has tyrosine-protein kinase activity and phosphorylates CDK1 at 'Tyr-4' upon DNA damage, facilitating its ubiquitination and proteasomal degradation. Either as an adapter protein and/or via its kinase activity, can regulate various signaling pathways (p38 MAP kinase, NF-kappa-B and insulin signaling pathways) and transcription factors (JUN, STAT1, STAT3, IRF1, ATF3) involved in the expression of genes encoding pro-inflammatory cytokines and IFNs. Activates the NF-kappa-B pathway via interaction with IKBKB and TRAF family of proteins and activates the p38 MAP kinase pathway via interaction with MAP2K6. Can act as both a positive and negative regulator of the insulin signaling pathway (ISP). Negatively regulates ISP by inducing the inhibitory phosphorylation of insulin receptor substrate 1 (IRS1) at 'Ser-312' and positively regulates ISP via phosphorylation of PPP2R5A which activates FOXO1, which in turn up-regulates the expression of insulin receptor substrate 2 (IRS2). Can regulate NLRP3 inflammasome assembly and the activation of NLRP3, NLRP1, AIM2 and NLRC4 inflammasomes. Plays a role in the regulation of the cytoskeleton by binding to gelsolin (GSN), sequestering the protein in an inactive conformation away from actin. The polypeptide is Interferon-induced, double-stranded RNA-activated protein kinase (EIF2AK2) (Homo sapiens (Human)).